A 431-amino-acid chain; its full sequence is MGVRAVVLSARSVAKINRVVARQILDSRGRPTVEVEVLLSDGAVGRVSVPSGASVGKFEAVELRDGDQAKYAGHGVLKPVQRVNTTVADSLAGVSPFDQRAVDEILLSLDGTKNKSKLGANATIGVSLAVAKAAADSVGIPLYKYLGGAVAREMPLPLVNVINGGLHADNLLDFQEFMIVPVGAKTFADAAQICAEVFYKLKEVLKKMGHSTNTGDEGGFAPNLENNTDVLDVLVEAIEKSGYRASSDVALAMDVAASTFYDGTSYKFSGKCLTSGELIACYEDMVSRYPIISIEDAMAESDIEGWKAVTKRLGDKIQLVGDDLFVTNPALIANGVENKLANAVLVKPNQIGTLTETIDAIRSAQRNNYNVIISHRSGETEDVTIAHIAVAANCGQIKSGSFSRSERLAKYNELLRIEEDLGKSALLYNVI.

Glutamine 175 is a (2R)-2-phosphoglycerate binding site. Catalysis depends on glutamate 217, which acts as the Proton donor. Aspartate 254, glutamate 295, and aspartate 322 together coordinate Mg(2+). (2R)-2-phosphoglycerate-binding residues include lysine 347, arginine 376, serine 377, and lysine 398. Residue lysine 347 is the Proton acceptor of the active site.

This sequence belongs to the enolase family. Mg(2+) is required as a cofactor.

The protein localises to the cytoplasm. It is found in the secreted. Its subcellular location is the cell surface. The catalysed reaction is (2R)-2-phosphoglycerate = phosphoenolpyruvate + H2O. The protein operates within carbohydrate degradation; glycolysis; pyruvate from D-glyceraldehyde 3-phosphate: step 4/5. Catalyzes the reversible conversion of 2-phosphoglycerate (2-PG) into phosphoenolpyruvate (PEP). It is essential for the degradation of carbohydrates via glycolysis. This Anaplasma marginale (strain St. Maries) protein is Enolase.